The sequence spans 474 residues: SHC-transforming protein 3 (474 aa).

A disordered region spans residues 1 to 27; it reads MSATRKSRAGDEPLPRPPRGAPHTSDQ. The region spanning 29–214 is the PID domain; sequence LGPGVTYVVK…LDEPWTEEEG (186 aa). Residues 215-378 form a CH1 region; that stretch reads DGPDHPYYNS…RMLEELNAEP (164 aa). A Phosphoserine modification is found at serine 282. Positions 308 to 328 are disordered; sequence QPVPPQVWPAATSSTESSPRK. Residues 379-470 form the SH2 domain; that stretch reads WYQGEMSRKE…GSELCLQQPV (92 aa).

In terms of assembly, interacts with the Trk receptors in a phosphotyrosine-dependent manner. Once activated, binds to GRB2. Interacts with activated EGF receptors. Post-translationally, tyrosine phosphorylated. Predominantly expressed in the adult brain.

Its function is as follows. Signaling adapter that couples activated growth factor receptors to signaling pathway in neurons. Involved in the signal transduction pathways of neurotrophin-activated Trk receptors in cortical neurons. The polypeptide is SHC-transforming protein 3 (Shc3) (Mus musculus (Mouse)).